A 103-amino-acid chain; its full sequence is uncharacterized protein (103 aa).

The region spanning 10 to 63 is the CHCH domain; it reads FPECDHLKQIYDKCFTEFFQKFITPNYRHQYAVNPCERLHDVYKRCVEERLATQ. 2 consecutive short sequence motifs (cx9C motif) follow at residues 13–23 and 45–55; these read CDHLKQIYDKC and CERLHDVYKRC. 2 cysteine pairs are disulfide-bonded: C13–C55 and C23–C45. The segment covering 80 to 90 has biased composition (basic and acidic residues); the sequence is TDDDKLKDRQN. Residues 80–103 are disordered; the sequence is TDDDKLKDRQNNQKTNSENKCSSS. Residues 91 to 103 are compositionally biased toward polar residues; it reads NQKTNSENKCSSS.

It belongs to the TRIAP1/MDM35 family.

This is an uncharacterized protein from Caenorhabditis elegans.